The following is an 85-amino-acid chain: Large ribosomal subunit protein bL27 (85 aa).

A disordered region spans residues Met1–Arg20.

This sequence belongs to the bacterial ribosomal protein bL27 family.

This is Large ribosomal subunit protein bL27 from Colwellia psychrerythraea (strain 34H / ATCC BAA-681) (Vibrio psychroerythus).